The chain runs to 370 residues: Aminomethyltransferase (370 aa).

It belongs to the GcvT family. In terms of assembly, the glycine cleavage system is composed of four proteins: P, T, L and H.

The enzyme catalyses N(6)-[(R)-S(8)-aminomethyldihydrolipoyl]-L-lysyl-[protein] + (6S)-5,6,7,8-tetrahydrofolate = N(6)-[(R)-dihydrolipoyl]-L-lysyl-[protein] + (6R)-5,10-methylene-5,6,7,8-tetrahydrofolate + NH4(+). Its function is as follows. The glycine cleavage system catalyzes the degradation of glycine. The sequence is that of Aminomethyltransferase from Corynebacterium aurimucosum (strain ATCC 700975 / DSM 44827 / CIP 107346 / CN-1) (Corynebacterium nigricans).